We begin with the raw amino-acid sequence, 898 residues long: Coiled-coil domain-containing protein 186 (898 aa).

Disordered stretches follow at residues 1-43 (MSET…NESK), 68-95 (NYIP…QIAN), and 702-749 (RRKL…SSVA). Ser-2 carries the N-acetylserine modification. The segment covering 82–95 (KTDTGSENSEQIAN) has biased composition (polar residues). The stretch at 201 to 712 (KYLQQEHIIK…RKLDQVESGS (512 aa)) forms a coiled coil. Residues 703 to 717 (RKLDQVESGSYDKEV) show a composition bias toward basic and acidic residues. Residues 718–734 (SSMGSRSSSSGSLNARS) are compositionally biased toward low complexity. Residue Ser-740 is modified to Phosphoserine. Coiled-coil stretches lie at residues 759–803 (AMLI…IQSY) and 855–894 (KLQA…LEQR).

This is Coiled-coil domain-containing protein 186 (CCDC186) from Homo sapiens (Human).